Consider the following 378-residue polypeptide: 23S rRNA (uracil(747)-C(5))-methyltransferase RlmC (378 aa).

Residues Cys-3, Cys-11, Cys-14, and Cys-87 each coordinate [4Fe-4S] cluster. S-adenosyl-L-methionine contacts are provided by Gln-212, Phe-241, Glu-262, and Asn-309. Cys-336 serves as the catalytic Nucleophile.

This sequence belongs to the class I-like SAM-binding methyltransferase superfamily. RNA M5U methyltransferase family. RlmC subfamily.

The enzyme catalyses uridine(747) in 23S rRNA + S-adenosyl-L-methionine = 5-methyluridine(747) in 23S rRNA + S-adenosyl-L-homocysteine + H(+). In terms of biological role, catalyzes the formation of 5-methyl-uridine at position 747 (m5U747) in 23S rRNA. The protein is 23S rRNA (uracil(747)-C(5))-methyltransferase RlmC of Shewanella halifaxensis (strain HAW-EB4).